The following is a 237-amino-acid chain: MKAFHLLAALAGAAVAQQAQLCDQYATYTGGVYTINNNLWGKDAGSGSQCTTVNSASSAGTSWSTKWNWSGGENSVKSYANSGLTFNKKLVSQISQIPTTARWSYDNTGIRADVAYDLFTAADINHVTWSGDYELMIWLARYGGVQPIGSQIATATVDGQTWELWYGANGSQKTYSFVAPTPITSFQGDVNDFFKYLTQNHGFPASSQYLITLQFGTEPFTGGPATLSVSNWSASVQ.

The N-terminal stretch at 1–16 (MKAFHLLAALAGAAVA) is a signal peptide. Q17 carries the post-translational modification Pyrrolidone carboxylic acid.

This sequence belongs to the glycosyl hydrolase 12 (cellulase H) family.

The protein resides in the secreted. The catalysed reaction is Endohydrolysis of (1-&gt;4)-beta-D-glucosidic linkages in cellulose, lichenin and cereal beta-D-glucans.. This Aspergillus aculeatus protein is Endoglucanase-1.